The primary structure comprises 90 residues: MNDDEDRAQLKARLWIRVEERLQQVLSSEDIKYTPRFINSLLELAYLQLGEMGSDLQAFARHAGRGVVNKSDLMLYLRKQPDLQERVTQE.

This sequence belongs to the TAF9 family. CENP-S/MHF1 subfamily. As to quaternary structure, the MHF histone-fold complex is a heterotetramer of 2 MHF1-MHF2 heterodimers. Together with MPH1/FANCM, forms the FANCM-MHF complex. Component of the inner kinetochore constitutive centromere-associated network (CCAN) (also known as central kinetochore CTF19 complex in yeast), which is composed of at least AME1, CHL4, CNN1, CTF3, CTF19, IML3, MCM16, MCM21, MCM22, MHF1, MHF2, MIF2, NKP1, NKP2, OKP1 and WIP1.

Functionally, dsDNA-binding component of a FANCM-MHF complex involved in DNA damage repair and genome maintenance. FANCM-MHF promotes gene conversion at blocked replication forks, probably by reversal of the stalled fork. Component of the kinetochore, a multiprotein complex that assembles on centromeric DNA and attaches chromosomes to spindle microtubules, mediating chromosome segregation and sister chromatid segregation during meiosis and mitosis. Component of the inner kinetochore constitutive centromere-associated network (CCAN), which serves as a structural platform for outer kinetochore assembly. In Saccharomyces cerevisiae (strain ATCC 204508 / S288c) (Baker's yeast), this protein is Inner kinetochore subunit MHF1.